The chain runs to 506 residues: Sucrose transport protein SUT3 (506 aa).

Topologically, residues 1 to 20 (MAVDMELDGGGDGKGKAPPQ) are cytoplasmic. A helical membrane pass occupies residues 21-41 (ISLSGLFLACMVAGGVQYGWA). Topologically, residues 42–54 (LQLSLLTPYVQTL) are extracellular. A helical transmembrane segment spans residues 55–75 (GIPHALTSVMWLCGPIAGLIV). Over 76-94 (QPCVGLYSDKCTSSLGRRR) the chain is Cytoplasmic. The helical transmembrane segment at 95–115 (PFILTGCIIICISVIVIGFSS) threads the bilayer. At 116–135 (DIGYALGDTTEDCKVYRGPR) the chain is on the extracellular side. A helical transmembrane segment spans residues 136–156 (YHAAAAFILGFWLLDFSNNTV). The Cytoplasmic segment spans residues 157 to 171 (QGPARALMADLSGRH). Residues 172–192 (GPSAANAIFCSWMALGNILGY) form a helical membrane-spanning segment. Over 193 to 220 (SSGSTNDWHKWFPFLMTRACCEACANLK) the chain is Extracellular. A helical transmembrane segment spans residues 221–241 (AAFLVAVVFLGLSTAVTMVFA). The Cytoplasmic segment spans residues 242–275 (REVALDPVAAAKRNEGEASGLLAVFKGMKNLPVG). Residues 276–296 (MPSVLIVTGLTWLSWFPFILF) traverse the membrane as a helical segment. Topologically, residues 297-327 (DTDWMGREIYHGRPDGSPAEVTAFQEGVRQG) are extracellular. The chain crosses the membrane as a helical span at residues 328-348 (AFGLLLNSIVLGISSFLIEPM). Over 349–355 (CRRLGAR) the chain is Cytoplasmic. The helical transmembrane segment at 356–376 (AVWVMSSAVVCVAMAAVSVLS) threads the bilayer. The Extracellular portion of the chain corresponds to 377-404 (AWSLGDFGGSVQDAARAPAEEGGVRASA). The chain crosses the membrane as a helical span at residues 405 to 425 (LALFVFLGLPFAVLCSVPFAV). Residues 426–441 (TAQLAASRGGGQGLCT) are Cytoplasmic-facing. A helical membrane pass occupies residues 442-462 (GVLNISIVVPQMAIALGAGPW). The Extracellular portion of the chain corresponds to 463-470 (DELFGEGN). A helical membrane pass occupies residues 471–491 (IPAFAMASVFAAAAAAAGVVL). The Cytoplasmic segment spans residues 492–506 (LPKVSVRSVSMAGGH).

It belongs to the glycoside-pentoside-hexuronide (GPH) cation symporter transporter (TC 2.A.2.4) family. In terms of assembly, homodimer. In terms of tissue distribution, widely expressed. Highest expression in sink leaves and lowest in germinating seeds.

It is found in the cell membrane. Its pathway is glycan biosynthesis; sucrose metabolism. Its function is as follows. Responsible for the transport of sucrose into the cell, with the concomitant uptake of protons (symport system). May also transport other glucosides. The chain is Sucrose transport protein SUT3 (SUT3) from Oryza sativa subsp. japonica (Rice).